The chain runs to 422 residues: MVGRGSFSSTSSASSINWIPKNTKTSIESVSNTISLSENGQNQDLETVTTKESNVGDSDTTENIKSPFNGQWPFSRRSSQSSSHPVFEETHWSKHSKRPGKLNVLTPTSPSNVNAEVQSISTKTQLSLLNLSPHKHKKPKDGLDLSALQKTLNGSRNFLRGRRDAGGIFGASIPQSLVTNQIINGFGAASLAFAKLGKVRSPLEGRFNLVPISADETWLIVESEVCSLYSGEALHYSLEDLNGILILHLQALIRDTKMNEFVGHLETLFRKATKCLSDSLSPVPEELFLNRIIETWLFFFSSVLPYVQGVFLPIKTKLFDEQEKTQLPYEVNEFCSTNREKLNVHRLALMTFRDYMVLPIANRIQICIGRAESAENALDNAGEVFARLFQILSLLASVRTNDSKEQEITNLATKVRCLLIAS.

Residues 48–69 (VTTKESNVGDSDTTENIKSPFN) show a composition bias toward polar residues. A disordered region spans residues 48–101 (VTTKESNVGDSDTTENIKSPFNGQWPFSRRSSQSSSHPVFEETHWSKHSKRPGK). Residues serine 109, serine 132, and serine 201 each carry the phosphoserine modification.

The protein belongs to the BIT61 family. In terms of assembly, the target of rapamycin complex 2 (TORC2) is composed of at least bit61, pop3/wat1, sin1, ste20 and tor1. Post-translationally, either Thr-23, Thr-25 or Ser-26 and Ser-78 or Ser-79 are phosphorylated as well.

The protein localises to the cytoplasm. It localises to the nucleus. In terms of biological role, component of TORC2, which regulates multiple cellular processes to control cell growth in response to environmental signals. TORC2 is required for cell survival under various stress conditions. TORC2 positively controls G1 cell-cycle arrest, sexual development and amino acid uptake. Positively regulates amino acid uptake through the control of expression of amino acid permeases. This is Target of rapamycin complex 2 subunit bit61 from Schizosaccharomyces pombe (strain 972 / ATCC 24843) (Fission yeast).